Consider the following 239-residue polypeptide: Glycerol-3-phosphate acyltransferase (239 aa).

Transmembrane regions (helical) follow at residues 6–26 (AIAL…SVMF), 61–81 (FLVG…SFLI), 99–119 (YYLT…PLYF), 135–155 (LAIS…VTLI), 159–179 (VSLA…VPWL), and 199–219 (WYII…VFWL).

It belongs to the PlsY family. Probably interacts with PlsX.

It is found in the cell membrane. It catalyses the reaction an acyl phosphate + sn-glycerol 3-phosphate = a 1-acyl-sn-glycero-3-phosphate + phosphate. It functions in the pathway lipid metabolism; phospholipid metabolism. Its function is as follows. Catalyzes the transfer of an acyl group from acyl-phosphate (acyl-PO(4)) to glycerol-3-phosphate (G3P) to form lysophosphatidic acid (LPA). This enzyme utilizes acyl-phosphate as fatty acyl donor, but not acyl-CoA or acyl-ACP. This chain is Glycerol-3-phosphate acyltransferase, found in Mycoplasma pneumoniae (strain ATCC 29342 / M129 / Subtype 1) (Mycoplasmoides pneumoniae).